The chain runs to 885 residues: Alanine--tRNA ligase (885 aa).

Zn(2+) is bound by residues His574, His578, Cys676, and His680.

The protein belongs to the class-II aminoacyl-tRNA synthetase family. The cofactor is Zn(2+).

Its subcellular location is the cytoplasm. The catalysed reaction is tRNA(Ala) + L-alanine + ATP = L-alanyl-tRNA(Ala) + AMP + diphosphate. Functionally, catalyzes the attachment of alanine to tRNA(Ala) in a two-step reaction: alanine is first activated by ATP to form Ala-AMP and then transferred to the acceptor end of tRNA(Ala). Also edits incorrectly charged Ser-tRNA(Ala) and Gly-tRNA(Ala) via its editing domain. This chain is Alanine--tRNA ligase, found in Syntrophobacter fumaroxidans (strain DSM 10017 / MPOB).